The chain runs to 490 residues: Sporulation-specific protein 1 (490 aa).

Residues 18 to 272 (YSIQSCIGRG…AYNLLSFEFV (255 aa)) enclose the Protein kinase domain. ATP is bound by residues 24-32 (IGRGNFGDV) and Lys47. Catalysis depends on Asp141, which acts as the Proton acceptor.

The protein belongs to the protein kinase superfamily. STE Ser/Thr protein kinase family. STE20 subfamily.

The protein resides in the nucleus. Its subcellular location is the cytoplasm. The enzyme catalyses L-seryl-[protein] + ATP = O-phospho-L-seryl-[protein] + ADP + H(+). It carries out the reaction L-threonyl-[protein] + ATP = O-phospho-L-threonyl-[protein] + ADP + H(+). Its function is as follows. Serine/threonine protein kinase required for spore wall development. The protein is Sporulation-specific protein 1 (SPS1) of Saccharomyces cerevisiae (strain ATCC 204508 / S288c) (Baker's yeast).